We begin with the raw amino-acid sequence, 454 residues long: tRNA modification GTPase MnmE (454 aa).

(6S)-5-formyl-5,6,7,8-tetrahydrofolate-binding residues include arginine 23, glutamate 80, and lysine 120. Residues 216 to 377 (GMKVVIAGRP…LRNHLKQSMG (162 aa)) form the TrmE-type G domain. Residue asparagine 226 coordinates K(+). GTP-binding positions include 226 to 231 (NAGKSS), 245 to 251 (TDIAGTT), 270 to 273 (DTAG), 335 to 338 (NKAD), and 358 to 360 (SAR). Mg(2+) is bound at residue serine 230. The K(+) site is built by threonine 245, isoleucine 247, and threonine 250. Threonine 251 is a binding site for Mg(2+). Lysine 454 provides a ligand contact to (6S)-5-formyl-5,6,7,8-tetrahydrofolate.

The protein belongs to the TRAFAC class TrmE-Era-EngA-EngB-Septin-like GTPase superfamily. TrmE GTPase family. In terms of assembly, homodimer. Heterotetramer of two MnmE and two MnmG subunits. It depends on K(+) as a cofactor.

It is found in the cytoplasm. Exhibits a very high intrinsic GTPase hydrolysis rate. Involved in the addition of a carboxymethylaminomethyl (cmnm) group at the wobble position (U34) of certain tRNAs, forming tRNA-cmnm(5)s(2)U34. The protein is tRNA modification GTPase MnmE of Escherichia coli O139:H28 (strain E24377A / ETEC).